A 103-amino-acid chain; its full sequence is uncharacterized protein (103 aa).

Low complexity predominate over residues 38-51 (TTTTSSTTSASTTS). Residues 38 to 70 (TTTTSSTTSASTTSQPSFSLPTSCNSNSPQSNL) form a disordered region. The span at 52–70 (QPSFSLPTSCNSNSPQSNL) shows a compositional bias: polar residues.

This is an uncharacterized protein from Dictyostelium discoideum (Social amoeba).